The sequence spans 273 residues: Proteasome subunit beta type-10 (273 aa).

N-acetylmethionine is present on Met-1. The propeptide at Met-1–Gly-39 is removed in mature form. The active-site Nucleophile is the Thr-40.

The protein belongs to the peptidase T1B family. In terms of assembly, the 26S proteasome consists of a 20S proteasome core and two 19S regulatory subunits. The 20S proteasome core is composed of 28 subunits that are arranged in four stacked rings, resulting in a barrel-shaped structure. The two end rings are each formed by seven alpha subunits, and the two central rings are each formed by seven beta subunits. The catalytic chamber with the active sites is on the inside of the barrel. Component of the immunoproteasome, where it displaces the equivalent housekeeping subunit PSMB7. Component of the spermatoproteasome, a form of the proteasome specifically found in testis. Post-translationally, autocleaved. The resulting N-terminal Thr residue of the mature subunit is responsible for the nucleophile proteolytic activity. In terms of tissue distribution, detected in liver (at protein level).

Its subcellular location is the cytoplasm. The protein localises to the nucleus. The enzyme catalyses Cleavage of peptide bonds with very broad specificity.. In terms of biological role, the proteasome is a multicatalytic proteinase complex which is characterized by its ability to cleave peptides with Arg, Phe, Tyr, Leu, and Glu adjacent to the leaving group at neutral or slightly basic pH. The proteasome has an ATP-dependent proteolytic activity. This subunit is involved in antigen processing to generate class I binding peptides. Plays a role in determining the T-cell repertoire for an antiviral T-cell response. This Mus musculus (Mouse) protein is Proteasome subunit beta type-10 (Psmb10).